Consider the following 463-residue polypeptide: MTTETRSLYSQLPAIDRLLRDSSFLSLRDTYGHTRVVELLRQMLDEAREVIRDSQTLPTWCENWAQEVDARLTKEAQSALRPVINLTGTVLHTNLGRALQAEAAVEAVAQAMRSPVTLEYDLDDAGRGHRDRALAQLLCRITGVEDACIVNNNAAAVLLMLAATASGKEVVVSRGELVEIGGSFRIPDVMRQAGCTLHEVGTTNRTHANDYRQAVNENTALLMKVHTSNYSIQGFTKAIDEAELVALGKELDVPVVTDLGSGSLVDLSQYGLPKEPMPQELIAAGVSLVSFSGDKLLGGPQAGIIVGKKEMIARLQSHPLKRALRADKMTLAALEATLRLYLHPEALSEKLPTLRLLTRSAEVIQIQAQRLQAPLAAHYGAEFAVQVMPCLSQIGSGSLPVDRLPSAALTFTPHDGRGSHLESLAARWRELPVPVIGRIYDGRLWLDLRCLEDEQRFLEMLLK.

Lysine 295 bears the N6-(pyridoxal phosphate)lysine mark.

The protein belongs to the SelA family. In terms of assembly, homodecamer; pentamer of dimers. Binds only one seryl-tRNA(Sec) per dimer. Pyridoxal 5'-phosphate is required as a cofactor.

The protein resides in the cytoplasm. The enzyme catalyses L-seryl-tRNA(Sec) + selenophosphate + H(+) = L-selenocysteinyl-tRNA(Sec) + phosphate. It participates in aminoacyl-tRNA biosynthesis; selenocysteinyl-tRNA(Sec) biosynthesis; selenocysteinyl-tRNA(Sec) from L-seryl-tRNA(Sec) (bacterial route): step 1/1. Converts seryl-tRNA(Sec) to selenocysteinyl-tRNA(Sec) required for selenoprotein biosynthesis. This Shigella dysenteriae serotype 1 (strain Sd197) protein is L-seryl-tRNA(Sec) selenium transferase.